Reading from the N-terminus, the 309-residue chain is MEGAGAARKRSRPDTANGGAAGGKRSRETESFQTGLSSKLKPCTKFFSTIGCPFGEGCHFSHFVPGGYQAVAKTLNLGNPAVPAPARAPMDHAAGGNSHPASSGKTRMCTKYNTAEGCKFGDKCHFAHGERELGKPAYMSHESAMAPPMGGRYGGRPEPPPPAAMGPPAGNFGASATAKISVDASLAGGIIGKGGVNTKQICRVTGVKLSIRDHESDSNLKNIELEGNFDQIKQASNMVGELIATISPSTPAKKPAGSAAGAAPAGRGGPGGRSNYKTKLCENFVKGTCTFGDRCHFAHGENEQRKGAA.

The segment at M1–L36 is disordered. 2 C3H1-type zinc fingers span residues S37–P65 and S103–R131. The interval A86–T106 is disordered. Positions S175 to V239 constitute a KH domain. Positions S249–R273 are disordered. Residues P251–A265 are compositionally biased toward low complexity. A C3H1-type 3 zinc finger spans residues N275–N302.

The chain is Zinc finger CCCH domain-containing protein 31 from Oryza sativa subsp. japonica (Rice).